Consider the following 84-residue polypeptide: Large ribosomal subunit protein bL27 (84 aa).

The segment at 1–22 (MAHKKGGGSTKNGRDSNPKYLG) is disordered.

Belongs to the bacterial ribosomal protein bL27 family.

This Prosthecochloris aestuarii (strain DSM 271 / SK 413) protein is Large ribosomal subunit protein bL27.